Reading from the N-terminus, the 357-residue chain is Holliday junction branch migration complex subunit RuvB (357 aa).

The span at 1–15 (MAIQSDSLSSLPDSP) shows a compositional bias: low complexity. The interval 1 to 30 (MAIQSDSLSSLPDSPRIVAPQPVSPNEESI) is disordered. Residues 13-195 (DSPRIVAPQP…FGIVSRLEFY (183 aa)) are large ATPase domain (RuvB-L). Residues L34, R35, G76, K79, T80, T81, 142–144 (EDF), R185, Y195, and R232 contribute to the ATP site. T80 serves as a coordination point for Mg(2+). Positions 196–266 (NTDELARIVT…AAGRALAMLD (71 aa)) are small ATPAse domain (RuvB-S). The head domain (RuvB-H) stretch occupies residues 269-357 (PQGLDVMDRK…SGGTGELFSK (89 aa)). DNA contacts are provided by R305, R324, and R329.

This sequence belongs to the RuvB family. Homohexamer. Forms an RuvA(8)-RuvB(12)-Holliday junction (HJ) complex. HJ DNA is sandwiched between 2 RuvA tetramers; dsDNA enters through RuvA and exits via RuvB. An RuvB hexamer assembles on each DNA strand where it exits the tetramer. Each RuvB hexamer is contacted by two RuvA subunits (via domain III) on 2 adjacent RuvB subunits; this complex drives branch migration. In the full resolvosome a probable DNA-RuvA(4)-RuvB(12)-RuvC(2) complex forms which resolves the HJ.

The protein resides in the cytoplasm. It carries out the reaction ATP + H2O = ADP + phosphate + H(+). Its function is as follows. The RuvA-RuvB-RuvC complex processes Holliday junction (HJ) DNA during genetic recombination and DNA repair, while the RuvA-RuvB complex plays an important role in the rescue of blocked DNA replication forks via replication fork reversal (RFR). RuvA specifically binds to HJ cruciform DNA, conferring on it an open structure. The RuvB hexamer acts as an ATP-dependent pump, pulling dsDNA into and through the RuvAB complex. RuvB forms 2 homohexamers on either side of HJ DNA bound by 1 or 2 RuvA tetramers; 4 subunits per hexamer contact DNA at a time. Coordinated motions by a converter formed by DNA-disengaged RuvB subunits stimulates ATP hydrolysis and nucleotide exchange. Immobilization of the converter enables RuvB to convert the ATP-contained energy into a lever motion, pulling 2 nucleotides of DNA out of the RuvA tetramer per ATP hydrolyzed, thus driving DNA branch migration. The RuvB motors rotate together with the DNA substrate, which together with the progressing nucleotide cycle form the mechanistic basis for DNA recombination by continuous HJ branch migration. Branch migration allows RuvC to scan DNA until it finds its consensus sequence, where it cleaves and resolves cruciform DNA. The sequence is that of Holliday junction branch migration complex subunit RuvB from Bordetella bronchiseptica (strain ATCC BAA-588 / NCTC 13252 / RB50) (Alcaligenes bronchisepticus).